A 341-amino-acid polypeptide reads, in one-letter code: Large ribosomal subunit protein uL3 (341 aa).

Disordered stretches follow at residues 1 to 31 and 234 to 261; these read MGHR…SPRS and HRKG…GQMG.

It belongs to the universal ribosomal protein uL3 family. As to quaternary structure, part of the 50S ribosomal subunit. Forms a cluster with proteins L14 and L24e.

Functionally, one of the primary rRNA binding proteins, it binds directly near the 3'-end of the 23S rRNA, where it nucleates assembly of the 50S subunit. The polypeptide is Large ribosomal subunit protein uL3 (Metallosphaera sedula (strain ATCC 51363 / DSM 5348 / JCM 9185 / NBRC 15509 / TH2)).